Here is a 338-residue protein sequence, read N- to C-terminus: Ketol-acid reductoisomerase (NADP(+)) (338 aa).

A KARI N-terminal Rossmann domain is found at 1–181 (MKVFYDNDAD…GGTRAGVIET (181 aa)). NADP(+) is bound by residues 24-27 (YGSQ), Arg-47, Ser-50, Ser-52, and 82-85 (DEGQ). Residue His-107 is part of the active site. Gly-133 serves as a coordination point for NADP(+). A KARI C-terminal knotted domain is found at 182 to 327 (SFREETETDL…SKLRSMMTWI (146 aa)). Mg(2+) is bound by residues Asp-190, Glu-194, Glu-226, and Glu-230. Ser-251 is a substrate binding site.

It belongs to the ketol-acid reductoisomerase family. It depends on Mg(2+) as a cofactor.

It carries out the reaction (2R)-2,3-dihydroxy-3-methylbutanoate + NADP(+) = (2S)-2-acetolactate + NADPH + H(+). It catalyses the reaction (2R,3R)-2,3-dihydroxy-3-methylpentanoate + NADP(+) = (S)-2-ethyl-2-hydroxy-3-oxobutanoate + NADPH + H(+). It functions in the pathway amino-acid biosynthesis; L-isoleucine biosynthesis; L-isoleucine from 2-oxobutanoate: step 2/4. Its pathway is amino-acid biosynthesis; L-valine biosynthesis; L-valine from pyruvate: step 2/4. Its function is as follows. Involved in the biosynthesis of branched-chain amino acids (BCAA). Catalyzes an alkyl-migration followed by a ketol-acid reduction of (S)-2-acetolactate (S2AL) to yield (R)-2,3-dihydroxy-isovalerate. In the isomerase reaction, S2AL is rearranged via a Mg-dependent methyl migration to produce 3-hydroxy-3-methyl-2-ketobutyrate (HMKB). In the reductase reaction, this 2-ketoacid undergoes a metal-dependent reduction by NADPH to yield (R)-2,3-dihydroxy-isovalerate. This chain is Ketol-acid reductoisomerase (NADP(+)), found in Acidithiobacillus ferrooxidans (strain ATCC 23270 / DSM 14882 / CIP 104768 / NCIMB 8455) (Ferrobacillus ferrooxidans (strain ATCC 23270)).